The chain runs to 609 residues: Threonine--tRNA ligase (609 aa).

Residues 1–143 (MRVLYIHAER…SFKPEGAKVE (143 aa)) are editing domain. Catalytic stretches follow at residues 195–491 (PRYL…PRLP) and 196–491 (RYLD…PRLP). Residues Cys288, His339, and His460 each contribute to the Zn(2+) site.

The protein belongs to the class-II aminoacyl-tRNA synthetase family. As to quaternary structure, homodimer. The cofactor is Zn(2+).

The protein localises to the cytoplasm. The catalysed reaction is tRNA(Thr) + L-threonine + ATP = L-threonyl-tRNA(Thr) + AMP + diphosphate + H(+). Functionally, catalyzes the attachment of threonine to tRNA(Thr) in a two-step reaction: L-threonine is first activated by ATP to form Thr-AMP and then transferred to the acceptor end of tRNA(Thr). Also edits incorrectly charged L-seryl-tRNA(Thr). This is Threonine--tRNA ligase from Pyrobaculum islandicum (strain DSM 4184 / JCM 9189 / GEO3).